The primary structure comprises 216 residues: Adenylate kinase (216 aa).

10-15 is a binding site for ATP; sequence GAGKGT. Residues 30-59 are NMP; the sequence is STGDILRENVKKGTALGLKAKSYMDKGELV. AMP contacts are provided by residues Thr-31, Arg-36, 57 to 59, 85 to 88, and Gln-92; these read ELV and GFPR. The LID stretch occupies residues 126–163; sequence GRRICRSCGASYHLVFNPPKAKDLCDSCGGELYQRDDD. Arg-127 contributes to the ATP binding site. The Zn(2+) site is built by Cys-130 and Cys-133. 136–137 provides a ligand contact to ATP; the sequence is SY. Residues Cys-150 and Cys-153 each contribute to the Zn(2+) site. 2 residues coordinate AMP: Arg-160 and Arg-171. Lys-199 is an ATP binding site.

The protein belongs to the adenylate kinase family. As to quaternary structure, monomer.

It localises to the cytoplasm. It catalyses the reaction AMP + ATP = 2 ADP. Its pathway is purine metabolism; AMP biosynthesis via salvage pathway; AMP from ADP: step 1/1. Catalyzes the reversible transfer of the terminal phosphate group between ATP and AMP. Plays an important role in cellular energy homeostasis and in adenine nucleotide metabolism. The sequence is that of Adenylate kinase from Methanocella arvoryzae (strain DSM 22066 / NBRC 105507 / MRE50).